Consider the following 129-residue polypeptide: RutC family protein PM1466 (129 aa).

The protein belongs to the RutC family.

This Pasteurella multocida (strain Pm70) protein is RutC family protein PM1466.